The chain runs to 390 residues: 8-amino-7-oxononanoate synthase (390 aa).

Residue Arg-19 coordinates substrate. 106–107 contacts pyridoxal 5'-phosphate; it reads GY. His-131 provides a ligand contact to substrate. Ser-176, His-204, and Thr-233 together coordinate pyridoxal 5'-phosphate. N6-(pyridoxal phosphate)lysine is present on Lys-236. Thr-350 contributes to the substrate binding site.

Belongs to the class-II pyridoxal-phosphate-dependent aminotransferase family. BioF subfamily. As to quaternary structure, homodimer. Requires pyridoxal 5'-phosphate as cofactor.

It carries out the reaction 6-carboxyhexanoyl-[ACP] + L-alanine + H(+) = (8S)-8-amino-7-oxononanoate + holo-[ACP] + CO2. It functions in the pathway cofactor biosynthesis; biotin biosynthesis. Functionally, catalyzes the decarboxylative condensation of pimeloyl-[acyl-carrier protein] and L-alanine to produce 8-amino-7-oxononanoate (AON), [acyl-carrier protein], and carbon dioxide. The polypeptide is 8-amino-7-oxononanoate synthase (Pseudomonas putida (strain GB-1)).